The primary structure comprises 265 residues: TATA-box-binding protein (265 aa).

A disordered region spans residues 1 to 40 (MYNPSQAVPVSLHKNQDNQDGGQQRSHYPQISSQQSQSYL). The span at 18 to 29 (NQDGGQQRSHYP) shows a compositional bias: polar residues. 2 consecutive repeat copies span residues 91 to 167 (LQNI…ARVV) and 181 to 258 (IQNM…YPIL).

The protein belongs to the TBP family. As to quaternary structure, belongs to the TFIID complex together with the TBP-associated factors (TAFs). Binds DNA as monomer.

It localises to the nucleus. Its function is as follows. General transcription factor that functions at the core of the DNA-binding multiprotein factor TFIID. Binding of TFIID to the TATA box is the initial transcriptional step of the pre-initiation complex (PIC), playing a role in the activation of eukaryotic genes transcribed by RNA polymerase II. The polypeptide is TATA-box-binding protein (Strongylocentrotus purpuratus (Purple sea urchin)).